Here is a 543-residue protein sequence, read N- to C-terminus: Excitatory amino acid transporter 1 (543 aa).

The Cytoplasmic portion of the chain corresponds to 1-47 (MTKSNGEEPRMGSRMERFQQGVRKRTLLAKKKVQNITKEDVKSYLFR). Residues 48–68 (NAFVLLTVSAVIVGTILGFAL) form a helical membrane-spanning segment. Over 69–86 (RPYKMSYREVKYFSFPGE) the chain is Extracellular. Residues 87–108 (LLMRMLQMLVLPLIISSLVTGM) form a helical membrane-spanning segment. Residues 109-122 (AALDSKASGKMGMR) are Cytoplasmic-facing. A helical transmembrane segment spans residues 123-145 (AVVYYMTTTIIAVVIGIIIVIII). Over 146–236 (HPGKGTKENM…IREEMVPVPG (91 aa)) the chain is Extracellular. The chain crosses the membrane as a helical span at residues 237–260 (SVNGVNALGLVVFSMCFGFVIGNM). The Cytoplasmic segment spans residues 261–269 (KEQGQALRE). The chain crosses the membrane as a helical span at residues 270-297 (FFDSLNEAIMRLVAVIMWYAPLGILFLI). Over 298–318 (AGKILEMEDMGVIGGQLAMYT) the chain is Extracellular. A helical transmembrane segment spans residues 319–340 (VTVIVGLLIHAVIVLPLLYFLV). Topologically, residues 341–345 (TRKNP) are cytoplasmic. Residues 346-376 (WVFIGGLLQALITALGTSSSSATLPITFKCL) constitute an intramembrane region (discontinuously helical). 363–365 (SSS) is an L-aspartate binding site. The Cytoplasmic portion of the chain corresponds to 377-385 (EENNGVDKR). A helical transmembrane segment spans residues 386-412 (ITRFVLPVGATINMDGTALYEALAAIF). Residues Gly-394, Thr-396, and Asn-398 each coordinate Na(+). An L-aspartate-binding site is contributed by Thr-402. At 413–425 (IAQVNNFDLNFGQ) the chain is on the extracellular side. Positions 426-459 (IITISITATAASIGAAGIPQAGLVTMVIVLTSVG) form an intramembrane region, discontinuously helical. An L-aspartate-binding site is contributed by 443-447 (IPQAG). Over 460–472 (LPTDDITLIIAVD) the chain is Extracellular. A helical transmembrane segment spans residues 473–494 (WFLDRLRTTTNVLGDSLGAGIV). Asp-476 and Asn-483 together coordinate L-aspartate. Residues Asn-483 and Asp-487 each coordinate Na(+). The Cytoplasmic segment spans residues 495–543 (EHLSRHELKNRDVEMGNSVIEENEMKKPYQLIAQDNEPEKPVADSETKM). Phosphoserine is present on Ser-512. The segment at 522–543 (PYQLIAQDNEPEKPVADSETKM) is disordered. The segment covering 531–543 (EPEKPVADSETKM) has biased composition (basic and acidic residues).

The protein belongs to the dicarboxylate/amino acid:cation symporter (DAACS) (TC 2.A.23) family. SLC1A3 subfamily. In terms of assembly, homotrimer. Post-translationally, glycosylated. Detected in brain and cerebellum. Both isoform GLAST-1 and GLAST-1A are expressed in bone and brain. In brain isoform GLAST-1 is highly enriched in the Purkinje cell layer in cerebellum.

It is found in the cell membrane. It carries out the reaction K(+)(in) + L-glutamate(out) + 3 Na(+)(out) + H(+)(out) = K(+)(out) + L-glutamate(in) + 3 Na(+)(in) + H(+)(in). The enzyme catalyses K(+)(in) + L-aspartate(out) + 3 Na(+)(out) + H(+)(out) = K(+)(out) + L-aspartate(in) + 3 Na(+)(in) + H(+)(in). It catalyses the reaction D-aspartate(out) + K(+)(in) + 3 Na(+)(out) + H(+)(out) = D-aspartate(in) + K(+)(out) + 3 Na(+)(in) + H(+)(in). Its function is as follows. Sodium-dependent, high-affinity amino acid transporter that mediates the uptake of L-glutamate and also L-aspartate and D-aspartate. Functions as a symporter that transports one amino acid molecule together with two or three Na(+) ions and one proton, in parallel with the counter-transport of one K(+) ion. Plays a redundant role in the rapid removal of released glutamate from the synaptic cleft, which is essential for terminating the postsynaptic action of glutamate. The chain is Excitatory amino acid transporter 1 (Slc1a3) from Rattus norvegicus (Rat).